We begin with the raw amino-acid sequence, 176 residues long: MTTIVSVRRNGQVVIGGDGQATLGNTVMKGNVRKVRRLYHDRVIAGFAGGTADAFTLFELFERKLELHQGHLVKAAVELAKDWRTDRMLRKLEALLAVADENASLIITGNGDVVQPENDLIAIGSGGPYAQAAARALLENTELGARDIVEKSLGIAGDICIYTNQFHTIEELASKA.

Thr2 is a catalytic residue. Residues Gly157, Cys160, and Thr163 each coordinate Na(+).

It belongs to the peptidase T1B family. HslV subfamily. In terms of assembly, a double ring-shaped homohexamer of HslV is capped on each side by a ring-shaped HslU homohexamer. The assembly of the HslU/HslV complex is dependent on binding of ATP.

Its subcellular location is the cytoplasm. It carries out the reaction ATP-dependent cleavage of peptide bonds with broad specificity.. Its activity is regulated as follows. Allosterically activated by HslU binding. Protease subunit of a proteasome-like degradation complex believed to be a general protein degrading machinery. The chain is ATP-dependent protease subunit HslV from Pectobacterium carotovorum subsp. carotovorum (strain PC1).